A 663-amino-acid polypeptide reads, in one-letter code: tRNA (guanine(26)-N(2))-dimethyltransferase (663 aa).

The transit peptide at 1–16 (MSLARTILWLSRPLRP) directs the protein to the mitochondrion. The region spanning 56–498 (ATVTEGAAKI…APPEALWDIM (443 aa)) is the Trm1 methyltransferase domain. S-adenosyl-L-methionine is bound at residue R83. Phosphoserine is present on S121. 2 residues coordinate S-adenosyl-L-methionine: R165 and D183. C347, C350, C383, and C386 together coordinate Zn(2+). S516 is modified (phosphoserine). A disordered region spans residues 534 to 574 (IREDANPSSRQRGLKRFQANPEANWGPRPRARPGGKAASED). Residues 540 to 572 (PSSRQRGLKRFQANPEANWGPRPRARPGGKAAS) carry the Nuclear localization signal motif. A C3H1-type zinc finger spans residues 599–626 (RLKTFPCKRFKEGTCQLGDQCCYSHSPA). Residue S624 is modified to Phosphoserine. Residues 632 to 663 (GDIPIEECPETTTKISPGPKAAAGGIPGPGVD) form a disordered region.

This sequence belongs to the class I-like SAM-binding methyltransferase superfamily. Trm1 family.

The protein resides in the mitochondrion. It is found in the nucleus. The protein localises to the cytoplasm. It carries out the reaction guanosine(26) in tRNA + 2 S-adenosyl-L-methionine = N(2)-dimethylguanosine(26) in tRNA + 2 S-adenosyl-L-homocysteine + 2 H(+). Dimethylates a single guanine residue at position 26 of most nuclear- and mitochondrial-encoded tRNAs using S-adenosyl-L-methionine as donor of the methyl groups. tRNA guanine(26)-dimethylation is required for redox homeostasis and ensure proper cellular proliferation and oxidative stress survival. The polypeptide is tRNA (guanine(26)-N(2))-dimethyltransferase (Mus musculus (Mouse)).